Reading from the N-terminus, the 203-residue chain is Imidazole glycerol phosphate synthase subunit HisH 1 (203 aa).

In terms of domain architecture, Glutamine amidotransferase type-1 spans Met-1 to Ile-203. Cys-82 serves as the catalytic Nucleophile. Residues His-184 and Glu-186 contribute to the active site.

In terms of assembly, heterodimer of HisH and HisF.

The protein resides in the cytoplasm. The catalysed reaction is 5-[(5-phospho-1-deoxy-D-ribulos-1-ylimino)methylamino]-1-(5-phospho-beta-D-ribosyl)imidazole-4-carboxamide + L-glutamine = D-erythro-1-(imidazol-4-yl)glycerol 3-phosphate + 5-amino-1-(5-phospho-beta-D-ribosyl)imidazole-4-carboxamide + L-glutamate + H(+). It catalyses the reaction L-glutamine + H2O = L-glutamate + NH4(+). It participates in amino-acid biosynthesis; L-histidine biosynthesis; L-histidine from 5-phospho-alpha-D-ribose 1-diphosphate: step 5/9. In terms of biological role, IGPS catalyzes the conversion of PRFAR and glutamine to IGP, AICAR and glutamate. The HisH subunit provides the glutamine amidotransferase activity that produces the ammonia necessary to HisF for the synthesis of IGP and AICAR. This is Imidazole glycerol phosphate synthase subunit HisH 1 (hisH1) from Methanococcus maripaludis (strain DSM 14266 / JCM 13030 / NBRC 101832 / S2 / LL).